Here is a 976-residue protein sequence, read N- to C-terminus: Synaptonemal complex protein 1 (976 aa).

The Mediates head to head self-assembly of N-terminal ends signature appears at 101 to 111; sequence GLSRVYSKLYK. Positions 117-120 match the Nuclear localization signal motif; that stretch reads KKWK. Residues 206-362 are interaction with SYCE3; that stretch reads ETRQVYMDLN…CQLTEEKETQ (157 aa). Coiled-coil stretches lie at residues 211–316, 391–439, 499–685, and 739–798; these read YMDL…SIEK, LRTE…LKKV, VKDL…VEKA, and EQEQ…KTQT. Residues 676–770 are required for pH-induced assembly of C-terminal ends into antiparallel tetramers; sequence ENLLEEVEKA…LSVKKQLEIE (95 aa). The Nuclear localization signal signature appears at 679–682; that stretch reads LEEV. Residues 784 to 976 form a DNA-binding region; the sequence is NTATLKEKKD…KLKEAEKLFV (193 aa). The Nuclear localization signal signature appears at 880–883; the sequence is KKRK.

Structural component of synaptonemal complexes. Homotetramer that consists of an N-terminal four-helical bundle that bifurcates into two elongated C-terminal dimeric coiled coils. This tetrameric building block potentially self-assembles into a supramolecular zipper-like lattice to mediate meiotic chromosome synapsis. Self-assembly is likely initiated by local proton density at chromosome axis, which is predicted to trigger antiparallel back to back assembly of adjacent C-terminal ends into tetrameric structures that anchor to chromosomal DNA. Then the N-terminal ends are predicted to undergo cooperative antiparallel head to head assembly at the midline of synaptonemal complexes central element to form a zipper-like lattice between properly aligned homologous chromosomes. The nascent synapsis generated by SYCP1 is stabilized through interaction with central element proteins SYCE1 and SYCE2. Interacts (via tetrameric core) with SYCE3; the interaction remodels SYCP1 homotetramers to 2:1 heterotrimers with SYCE3. SYCP1/SYCE3 heterotrimers form lattice assemblies as part of the mature synaptonemal complex via both lateral and head-to-head interactions. Forms a complex with EWSR1, PRDM9, SYCP3 and REC8; complex formation is dependent of phosphorylated form of REC8 and requires PRDM9 bound to hotspot DNA; EWSR1 joins PRDM9 with the chromosomal axis through REC8. Interacts with SPO16. As to expression, testis.

Its subcellular location is the nucleus. It localises to the chromosome. The protein localises to the centromere. Its function is as follows. Major component of the transverse filaments of synaptonemal complexes, formed between homologous chromosomes during meiotic prophase. Required for normal assembly of the central element of the synaptonemal complexes. Required for normal centromere pairing during meiosis. Required for normal meiotic chromosome synapsis during oocyte and spermatocyte development and for normal male and female fertility. The protein is Synaptonemal complex protein 1 of Homo sapiens (Human).